A 301-amino-acid polypeptide reads, in one-letter code: Protein ARMCX6 (301 aa).

Residues 1–6 (MGRARE) are mitochondrion outer membrane (MOM)-targeting sequence. The Mitochondrial intermembrane portion of the chain corresponds to 1-7 (MGRAREM). Residues 8-25 (GWMAAGLMIGAGACYCMY) traverse the membrane as a helical; Signal-anchor segment. The tract at residues 26-36 (KLTMGRDEGNE) is mitochondrion outer membrane (MOM)-targeting sequence. Residues 26 to 301 (KLTMGRDEGN…REMLVEAISP (276 aa)) lie on the Cytoplasmic side of the membrane. A disordered region spans residues 70–105 (SEDGEWDEPGAPGGTEDRRSGGGKANRAHPTKQRPF).

Belongs to the eutherian X-chromosome-specific Armcx family.

It is found in the mitochondrion. The protein localises to the mitochondrion outer membrane. Functionally, may regulate the dynamics and distribution of mitochondria in neural cells. The polypeptide is Protein ARMCX6 (Armcx6) (Rattus norvegicus (Rat)).